The chain runs to 123 residues: Putative acidic leucine-rich nuclear phosphoprotein 32 family member C (123 aa).

4 LRR repeats span residues 43 to 64, 65 to 87, 89 to 110, and 114 to 123; these read ELEFLSTINVGLTFISNLPKLN, KLKKLELSENRISGDLEVLAEKC, NLKHLNLSGNKIKDLSTIELLK, and NLKSLDLFNC.

The protein belongs to the ANP32 family.

In Mus musculus (Mouse), this protein is Putative acidic leucine-rich nuclear phosphoprotein 32 family member C (Anp32c).